The following is a 376-amino-acid chain: Actin (376 aa).

It belongs to the actin family.

The protein localises to the cytoplasm. It localises to the cytoskeleton. It carries out the reaction ATP + H2O = ADP + phosphate + H(+). In terms of biological role, actins are highly conserved proteins that are involved in various types of cell motility and are ubiquitously expressed in all eukaryotic cells. The protein is Actin of Trypanosoma cruzi.